A 123-amino-acid polypeptide reads, in one-letter code: Large ribosomal subunit protein bL12 (123 aa).

It belongs to the bacterial ribosomal protein bL12 family. As to quaternary structure, homodimer. Part of the ribosomal stalk of the 50S ribosomal subunit. Forms a multimeric L10(L12)X complex, where L10 forms an elongated spine to which 2 to 4 L12 dimers bind in a sequential fashion. Binds GTP-bound translation factors.

Its function is as follows. Forms part of the ribosomal stalk which helps the ribosome interact with GTP-bound translation factors. Is thus essential for accurate translation. In Hydrogenovibrio crunogenus (strain DSM 25203 / XCL-2) (Thiomicrospira crunogena), this protein is Large ribosomal subunit protein bL12.